Here is a 129-residue protein sequence, read N- to C-terminus: MSYKFPDNLNYADTHEYVLEENGLLKIGVSEFAIDQLGDIVFVELADEGATLEKGETFGTIESVKAVEEVYLPFSGEIVSVNESVIENPELLQSDPIGDGWLVILKPESKASIADLMTSEEYQSKVVPK.

The 83-residue stretch at 24 to 106 (LLKIGVSEFA…IGDGWLVILK (83 aa)) folds into the Lipoyl-binding domain. The residue at position 65 (K65) is an N6-lipoyllysine.

It belongs to the GcvH family. In terms of assembly, the glycine cleavage system is composed of four proteins: P, T, L and H. It depends on (R)-lipoate as a cofactor.

The glycine cleavage system catalyzes the degradation of glycine. The H protein shuttles the methylamine group of glycine from the P protein to the T protein. The protein is Glycine cleavage system H protein of Prochlorococcus marinus (strain MIT 9301).